A 339-amino-acid polypeptide reads, in one-letter code: Ketol-acid reductoisomerase (NADP(+)) (339 aa).

The KARI N-terminal Rossmann domain maps to 1–182; it reads MRVYYDRDAD…GGGRAGIIET (182 aa). NADP(+)-binding positions include 24-27, R48, S51, S53, and 83-86; these read YGSQ and DELQ. H108 is a catalytic residue. G134 contacts NADP(+). The KARI C-terminal knotted domain maps to 183-328; it reads TFKEECETDL…EKLREMMPWI (146 aa). D191, E195, E227, and E231 together coordinate Mg(2+). Residue S252 coordinates substrate.

It belongs to the ketol-acid reductoisomerase family. Requires Mg(2+) as cofactor.

The enzyme catalyses (2R)-2,3-dihydroxy-3-methylbutanoate + NADP(+) = (2S)-2-acetolactate + NADPH + H(+). It carries out the reaction (2R,3R)-2,3-dihydroxy-3-methylpentanoate + NADP(+) = (S)-2-ethyl-2-hydroxy-3-oxobutanoate + NADPH + H(+). It participates in amino-acid biosynthesis; L-isoleucine biosynthesis; L-isoleucine from 2-oxobutanoate: step 2/4. The protein operates within amino-acid biosynthesis; L-valine biosynthesis; L-valine from pyruvate: step 2/4. Involved in the biosynthesis of branched-chain amino acids (BCAA). Catalyzes an alkyl-migration followed by a ketol-acid reduction of (S)-2-acetolactate (S2AL) to yield (R)-2,3-dihydroxy-isovalerate. In the isomerase reaction, S2AL is rearranged via a Mg-dependent methyl migration to produce 3-hydroxy-3-methyl-2-ketobutyrate (HMKB). In the reductase reaction, this 2-ketoacid undergoes a metal-dependent reduction by NADPH to yield (R)-2,3-dihydroxy-isovalerate. The polypeptide is Ketol-acid reductoisomerase (NADP(+)) (Azorhizobium caulinodans (strain ATCC 43989 / DSM 5975 / JCM 20966 / LMG 6465 / NBRC 14845 / NCIMB 13405 / ORS 571)).